We begin with the raw amino-acid sequence, 512 residues long: MRLNSTEISKLIKERIAQFEVFNQSYNEGSIISVSDGIIKINGLSNVMLGEMILLPNNEYAIALNIERDTVGAVVMGPYIHISEGAKVRCTGKILEVPVGDNFLGRVVNALGFPIDGKDSIQNDGFFPVEADAPGVIDRKSVNQPIQTGYKVIDSMIPIGRGQRELIIGDRQTGKTALAIDTIINQKQSGIKCIYVAIGQKLSTIINVVKKLEENNALFNTIIVVASASEAASLQYLAPYSGCAMAEFFRNKGEDSLIIYDDLSKHAVAYRQISLLLRRPPGREAFPGDIFYLHSRLLERASRVSMEYVQKITKNKITGKTGSITALPIIETQSGDVSAFVPTNVISITDGQIFLESNLFNSGIRPAVNPGISVSRVGSAAQTTIIKKLSSGIRTALAQYQELAAFSQFSSDLDDTTRKQLNHGQKITELLKQKQYSPISIAEQALILFVAENNFLDDISIDKITKFEKEILIYAHNYYFDLMEEINKIGDFNIVIKDKFIKLITEFKKNQF.

169–176 (GDRQTGKT) serves as a coordination point for ATP.

The protein belongs to the ATPase alpha/beta chains family. In terms of assembly, F-type ATPases have 2 components, CF(1) - the catalytic core - and CF(0) - the membrane proton channel. CF(1) has five subunits: alpha(3), beta(3), gamma(1), delta(1), epsilon(1). CF(0) has three main subunits: a(1), b(2) and c(9-12). The alpha and beta chains form an alternating ring which encloses part of the gamma chain. CF(1) is attached to CF(0) by a central stalk formed by the gamma and epsilon chains, while a peripheral stalk is formed by the delta and b chains.

Its subcellular location is the cell membrane. The catalysed reaction is ATP + H2O + 4 H(+)(in) = ADP + phosphate + 5 H(+)(out). Functionally, produces ATP from ADP in the presence of a proton gradient across the membrane. The alpha chain is a regulatory subunit. This is ATP synthase subunit alpha from Buchnera aphidicola subsp. Acyrthosiphon pisum (strain Tuc7).